The primary structure comprises 513 residues: Plexin domain-containing protein 2 (513 aa).

An N-terminal signal peptide occupies residues 1-24; the sequence is MGARSESLVGVVLLFQLLADRLWC. The Extracellular segment spans residues 25-438; it reads AATASDSLYD…AEMKTGTLHT (414 aa). 6 N-linked (GlcNAc...) asparagine glycosylation sites follow: Asn88, Asn145, Asn198, Asn206, Asn222, and Asn330. The PSI domain maps to 312 to 357; it reads TCLQFNSCSSCVSSMIGFNCSWCNIPQRCSSGFDRHRQDWVENGCT. The helical transmembrane segment at 439 to 459 threads the bilayer; the sequence is GLIIGILILVLLIITAILVAV. The Cytoplasmic portion of the chain corresponds to 460 to 513; it reads YMYHHPTSSASLFLIERRPSRWPAMKFRRGSGHPAYAEVEPIGEKEGFIVSEQC.

This sequence belongs to the plexin family.

It is found in the membrane. This is Plexin domain-containing protein 2 (plxdc2) from Xenopus laevis (African clawed frog).